Consider the following 190-residue polypeptide: Glutathione peroxidase 2 (190 aa).

Residue Sec40 is part of the active site. Residue Sec40 is a non-standard amino acid, selenocysteine.

This sequence belongs to the glutathione peroxidase family. Homotetramer. Exclusively expressed in the stomach and small intestine.

The protein resides in the cytoplasm. The protein localises to the cytosol. The enzyme catalyses 2 glutathione + H2O2 = glutathione disulfide + 2 H2O. It catalyses the reaction a hydroperoxy polyunsaturated fatty acid + 2 glutathione = a hydroxy polyunsaturated fatty acid + glutathione disulfide + H2O. The catalysed reaction is tert-butyl hydroperoxide + 2 glutathione = tert-butanol + glutathione disulfide + H2O. It carries out the reaction cumene hydroperoxide + 2 glutathione = 2-phenylpropan-2-ol + glutathione disulfide + H2O. The enzyme catalyses (13S)-hydroperoxy-(9Z,11E)-octadecadienoate + 2 glutathione = (13S)-hydroxy-(9Z,11E)-octadecadienoate + glutathione disulfide + H2O. It catalyses the reaction (5S)-hydroperoxy-(6E,8Z,11Z,14Z)-eicosatetraenoate + 2 glutathione = (5S)-hydroxy-(6E,8Z,11Z,14Z)-eicosatetraenoate + glutathione disulfide + H2O. The catalysed reaction is (12R)-hydroperoxy-(5Z,8Z,10E,14Z)-eicosatetraenoate + 2 glutathione = (12R)-hydroxy-(5Z,8Z,10E,14Z)-eicosatetraenoate + glutathione disulfide + H2O. It carries out the reaction (15S)-hydroperoxy-(5Z,8Z,11Z,13E)-eicosatetraenoate + 2 glutathione = (15S)-hydroxy-(5Z,8Z,11Z,13E)-eicosatetraenoate + glutathione disulfide + H2O. Functionally, catalyzes the reduction of hydroperoxides in a glutathione-dependent manner thus regulating cellular redox homeostasis. Can reduce small soluble hydroperoxides such as H2O2, cumene hydroperoxide and tert-butyl hydroperoxide, as well as several fatty acid-derived hydroperoxides. Cannot reduce phosphatidycholine hydroperoxide. This Macaca fuscata fuscata (Japanese macaque) protein is Glutathione peroxidase 2 (GPX2).